A 203-amino-acid polypeptide reads, in one-letter code: Urease accessory protein UreG (203 aa).

Position 12-19 (12-19) interacts with GTP; sequence GPVGSGKT.

This sequence belongs to the SIMIBI class G3E GTPase family. UreG subfamily. Homodimer. UreD, UreF and UreG form a complex that acts as a GTP-hydrolysis-dependent molecular chaperone, activating the urease apoprotein by helping to assemble the nickel containing metallocenter of UreC. The UreE protein probably delivers the nickel.

The protein localises to the cytoplasm. Its function is as follows. Facilitates the functional incorporation of the urease nickel metallocenter. This process requires GTP hydrolysis, probably effectuated by UreG. This is Urease accessory protein UreG from Nitrosococcus oceani (strain ATCC 19707 / BCRC 17464 / JCM 30415 / NCIMB 11848 / C-107).